The primary structure comprises 239 residues: Small ribosomal subunit protein uS2 (239 aa).

This sequence belongs to the universal ribosomal protein uS2 family.

This Lysinibacillus sphaericus (strain C3-41) protein is Small ribosomal subunit protein uS2.